A 263-amino-acid polypeptide reads, in one-letter code: 4-hydroxy-tetrahydrodipicolinate reductase (263 aa).

Residues 8 to 13, D34, 99 to 101, and 125 to 128 contribute to the NAD(+) site; these read GACGRM, GTT, and SPNY. Residue H157 is the Proton donor/acceptor of the active site. H158 lines the (S)-2,3,4,5-tetrahydrodipicolinate pocket. Residue K161 is the Proton donor of the active site. 167-168 serves as a coordination point for (S)-2,3,4,5-tetrahydrodipicolinate; that stretch reads GT.

This sequence belongs to the DapB family.

It localises to the cytoplasm. It carries out the reaction (S)-2,3,4,5-tetrahydrodipicolinate + NAD(+) + H2O = (2S,4S)-4-hydroxy-2,3,4,5-tetrahydrodipicolinate + NADH + H(+). The catalysed reaction is (S)-2,3,4,5-tetrahydrodipicolinate + NADP(+) + H2O = (2S,4S)-4-hydroxy-2,3,4,5-tetrahydrodipicolinate + NADPH + H(+). It functions in the pathway amino-acid biosynthesis; L-lysine biosynthesis via DAP pathway; (S)-tetrahydrodipicolinate from L-aspartate: step 4/4. Functionally, catalyzes the conversion of 4-hydroxy-tetrahydrodipicolinate (HTPA) to tetrahydrodipicolinate. The chain is 4-hydroxy-tetrahydrodipicolinate reductase from Methanosarcina mazei (strain ATCC BAA-159 / DSM 3647 / Goe1 / Go1 / JCM 11833 / OCM 88) (Methanosarcina frisia).